Here is a 457-residue protein sequence, read N- to C-terminus: MKKVFIKTFGCQMNEYDSDKMADVLNAAEGLVPTDTPEDADVILFNTCSVREKAQEKVFSDLGRVKALKARNPDLVVGVGGCVASQEGASIVARAPYVDVVFGPQTLHRLPELIDARRRTGRPQVDVSFPEIEKFDHLPPARVEGPSAFVSIMEGCSKYCSYCVVPYTRGEEVSRPFEDVLAEVAGLAEQGVREVTLLGQNVNAYIGKMGGTSERADFALLLEYVAEIPGIERIRYTTSHPKEFTARLIEAYATNRKLVDHLHLPVQHGSDRILMAMKRGYTVLEYKSIIRKLRAIRPDISIATDFIVGFPGETDADFAKTMDLVHEIGYDNSFSFIYSPRPGTPAANLHDDTPHAVKLERLKHLQATIDANMARISEGMVGSVQRILVEGPSRKDPSELHGRTENNRVVNFALPDLPQARRDQLVGQMLDVRIVHAYPHSLRGDVVEQRPDGVTQH.

The MTTase N-terminal domain occupies K2–R119. The [4Fe-4S] cluster site is built by C11, C48, C82, C156, C160, and C163. Residues R142–R375 enclose the Radical SAM core domain. A TRAM domain is found at E378–E448.

It belongs to the methylthiotransferase family. MiaB subfamily. Monomer. It depends on [4Fe-4S] cluster as a cofactor.

The protein localises to the cytoplasm. It catalyses the reaction N(6)-dimethylallyladenosine(37) in tRNA + (sulfur carrier)-SH + AH2 + 2 S-adenosyl-L-methionine = 2-methylsulfanyl-N(6)-dimethylallyladenosine(37) in tRNA + (sulfur carrier)-H + 5'-deoxyadenosine + L-methionine + A + S-adenosyl-L-homocysteine + 2 H(+). Its function is as follows. Catalyzes the methylthiolation of N6-(dimethylallyl)adenosine (i(6)A), leading to the formation of 2-methylthio-N6-(dimethylallyl)adenosine (ms(2)i(6)A) at position 37 in tRNAs that read codons beginning with uridine. The polypeptide is tRNA-2-methylthio-N(6)-dimethylallyladenosine synthase (Ralstonia nicotianae (strain ATCC BAA-1114 / GMI1000) (Ralstonia solanacearum)).